We begin with the raw amino-acid sequence, 348 residues long: Holliday junction branch migration complex subunit RuvB (348 aa).

Positions 3-183 (DDGLVSAAAS…FGFTAHLDFY (181 aa)) are large ATPase domain (RuvB-L). ATP is bound by residues L22, R23, G64, K67, T68, S69, 130–132 (EDF), R173, Y183, and R220. Residue T68 participates in Mg(2+) binding. Residues 184-254 (DADELARVLT…IAQAALRIYD (71 aa)) form a small ATPAse domain (RuvB-S) region. Residues 257–348 (GLGLDRLDRA…TQVSLFTEGE (92 aa)) form a head domain (RuvB-H) region. DNA-binding residues include R312 and R317.

This sequence belongs to the RuvB family. In terms of assembly, homohexamer. Forms an RuvA(8)-RuvB(12)-Holliday junction (HJ) complex. HJ DNA is sandwiched between 2 RuvA tetramers; dsDNA enters through RuvA and exits via RuvB. An RuvB hexamer assembles on each DNA strand where it exits the tetramer. Each RuvB hexamer is contacted by two RuvA subunits (via domain III) on 2 adjacent RuvB subunits; this complex drives branch migration. In the full resolvosome a probable DNA-RuvA(4)-RuvB(12)-RuvC(2) complex forms which resolves the HJ.

It is found in the cytoplasm. It catalyses the reaction ATP + H2O = ADP + phosphate + H(+). Functionally, the RuvA-RuvB-RuvC complex processes Holliday junction (HJ) DNA during genetic recombination and DNA repair, while the RuvA-RuvB complex plays an important role in the rescue of blocked DNA replication forks via replication fork reversal (RFR). RuvA specifically binds to HJ cruciform DNA, conferring on it an open structure. The RuvB hexamer acts as an ATP-dependent pump, pulling dsDNA into and through the RuvAB complex. RuvB forms 2 homohexamers on either side of HJ DNA bound by 1 or 2 RuvA tetramers; 4 subunits per hexamer contact DNA at a time. Coordinated motions by a converter formed by DNA-disengaged RuvB subunits stimulates ATP hydrolysis and nucleotide exchange. Immobilization of the converter enables RuvB to convert the ATP-contained energy into a lever motion, pulling 2 nucleotides of DNA out of the RuvA tetramer per ATP hydrolyzed, thus driving DNA branch migration. The RuvB motors rotate together with the DNA substrate, which together with the progressing nucleotide cycle form the mechanistic basis for DNA recombination by continuous HJ branch migration. Branch migration allows RuvC to scan DNA until it finds its consensus sequence, where it cleaves and resolves cruciform DNA. In Frankia casuarinae (strain DSM 45818 / CECT 9043 / HFP020203 / CcI3), this protein is Holliday junction branch migration complex subunit RuvB.